The primary structure comprises 174 residues: 2-hydroxy-palmitic acid dioxygenase MPO1 (174 aa).

Residues 1–23 are Cytoplasmic-facing; it reads MGEGLLDLRSQLGFYKFYHHNPK. A helical transmembrane segment spans residues 24 to 44; sequence NVLIHSIFVPTILFSGSCMLH. At 45 to 63 the chain is on the lumenal side; that stretch reads RVKIYQSISLTAVLSVLFS. The chain crosses the membrane as a helical span at residues 64-84; that stretch reads IFYCLLYLPTGLLAGVLLLLL. The Cytoplasmic segment spans residues 85–98; that stretch reads NLALIDHRVDLTFK. Residues 99–119 form a helical membrane-spanning segment; the sequence is QELGLFTIGWIFQFVGHGVFE. Residues 120 to 131 lie on the Lumenal side of the membrane; the sequence is KRRPALIDNLVQ. The chain crosses the membrane as a helical span at residues 132-152; that stretch reads SLVLAPYFIMFEFLFKLGFMP. The Cytoplasmic segment spans residues 153 to 174; the sequence is RLKATLEHDLEIKQRNLRMQRQ.

This sequence belongs to the MPO1 family. The cofactor is Fe(2+).

It is found in the endoplasmic reticulum membrane. It carries out the reaction (R)-2-hydroxyhexadecanoate + O2 = pentadecanoate + CO2 + H2O. In terms of biological role, dioxygenase that catalyzes the alpha-oxidation of 2-hydroxy fatty acids in an iron-dependent manner. Involved in metabolism of phytosphingosine and is required for proper endoplasmic reticulum stress response. The protein is 2-hydroxy-palmitic acid dioxygenase MPO1 of Saccharomyces cerevisiae (strain ATCC 204508 / S288c) (Baker's yeast).